A 336-amino-acid polypeptide reads, in one-letter code: Anthranilate phosphoribosyltransferase (336 aa).

5-phospho-alpha-D-ribose 1-diphosphate is bound by residues glycine 82, 85–86 (GD), threonine 90, 92–95 (NIST), 110–118 (KHGNRSVSS), and serine 122. An anthranilate-binding site is contributed by glycine 82. Serine 94 is a binding site for Mg(2+). Asparagine 113 is a binding site for anthranilate. Position 168 (arginine 168) interacts with anthranilate. Mg(2+) is bound by residues aspartate 227 and glutamate 228.

It belongs to the anthranilate phosphoribosyltransferase family. As to quaternary structure, homodimer. Requires Mg(2+) as cofactor.

It catalyses the reaction N-(5-phospho-beta-D-ribosyl)anthranilate + diphosphate = 5-phospho-alpha-D-ribose 1-diphosphate + anthranilate. It participates in amino-acid biosynthesis; L-tryptophan biosynthesis; L-tryptophan from chorismate: step 2/5. Its function is as follows. Catalyzes the transfer of the phosphoribosyl group of 5-phosphorylribose-1-pyrophosphate (PRPP) to anthranilate to yield N-(5'-phosphoribosyl)-anthranilate (PRA). The sequence is that of Anthranilate phosphoribosyltransferase from Leptospira interrogans serogroup Icterohaemorrhagiae serovar Lai (strain 56601).